The following is a 1333-amino-acid chain: Partitioning defective 3 homolog (1333 aa).

Ser-25 bears the Phosphoserine mark. Thr-91 carries the post-translational modification Phosphothreonine. The interval 143–262 (SSDPALTGLS…VGHADTGLEN (120 aa)) is disordered. Composition is skewed to polar residues over residues 150–163 (GLST…FSSE) and 171–187 (TRWS…TAGS). Phosphoserine occurs at positions 156 and 174. The span at 190–203 (TCDRKKDENYRSLP) shows a compositional bias: basic and acidic residues. Over residues 207 to 224 (SSWSNQFQRDNARSSLSA) the composition is skewed to polar residues. The 89-residue stretch at 271-359 (MVKLVQVPND…ARVIWFHVVP (89 aa)) folds into the PDZ 1 domain. Disordered stretches follow at residues 369-388 (LSQR…DSHC) and 397-441 (NAPQ…APPS). Ser-383 is modified (phosphoserine). 2 consecutive PDZ domains span residues 461 to 546 (NIQL…LVFR) and 590 to 677 (EVPL…GMIQ). Tyr-489 is modified (phosphotyrosine). Phosphoserine is present on residues Ser-692, Ser-695, Ser-715, Ser-728, Ser-806, and Ser-824. Interaction with PRKCI and PRKCZ regions lie at residues 712 to 932 (RRIS…YDKP) and 712 to 936 (RRIS…MVDD). An N6-acetyllysine modification is found at Lys-831. Ser-834 is modified (phosphoserine). Lys-848 bears the N6-acetyllysine mark. Ser-849 and Ser-869 each carry phosphoserine. 5 disordered regions span residues 861–884 (TVDD…KKSS), 928–1011 (SYDK…AKKG), 1024–1071 (KHRK…ERQA), 1110–1267 (PQSP…LGGH), and 1283–1333 (QEQR…PFYS). At Lys-881 the chain carries N6-acetyllysine. Residues 931-1333 (KPMVDDDDEG…TPEKGRPFYS (403 aa)) are interaction with FRMD4A. The segment covering 935 to 949 (DDDDEGMETLEEDTE) has biased composition (acidic residues). Residue Ser-958 is modified to Phosphoserine; by AURKA. Phosphoserine occurs at positions 967 and 969. Basic and acidic residues-rich tracts occupy residues 977–1005 (DPEK…EKDK) and 1026–1039 (RKDD…RIKI). Residue Ser-1042 is modified to Phosphoserine. A compositionally biased stretch (basic and acidic residues) spans 1046-1071 (EEDRVRMKEEQERIQAKTREFRERQA). A coiled-coil region spans residues 1046 to 1078 (EEDRVRMKEEQERIQAKTREFRERQARERDYAE). Polar residues predominate over residues 1134–1143 (PGDSNRSTPS). Basic and acidic residues predominate over residues 1144-1171 (NHDRIQRLRQEFQQAKQDEDVEDRRRTY). Coiled-coil stretches lie at residues 1145–1168 (HDRI…EDRR), 1195–1218 (VQVQ…YSSL), and 1274–1295 (MLET…LKKQ). Positions 1176-1199 (SWSSSRPASQSGRHSVSVEVQVQR) are enriched in low complexity. Over residues 1215–1236 (YSSLPRQSRKNASSISQDSWEQ) the composition is skewed to polar residues. Basic and acidic residues predominate over residues 1283–1292 (QEQRRKEQQL). Polar residues predominate over residues 1314 to 1323 (SQVARLNRLQ). The span at 1324–1333 (TPEKGRPFYS) shows a compositional bias: basic and acidic residues. The residue at position 1327 (Lys-1327) is an N6-acetyllysine.

This sequence belongs to the PAR3 family. Interacts with PRCKI and CDH5. Interacts (via PDZ 3 domain) with PTEN (via C-terminus). Component of a complex whose core is composed of ARHGAP17, AMOT, PALS1, PATJ and PARD3/PAR3. Interacts with LIMK2, AURKA and AURKB. Component of the Par polarity complex, composed of at least phosphorylated PRKCZ, PARD3 and TIAM1. Interacts with ECT2 and FBF1. Interacts (via PDZ 1 domain) with F11R/JAM1, PARD6A and PARD6B. Part of a complex with PARD6A or PARD6B, PRKCI or PRKCZ and CDC42 or RAC1. Directly interacts with TIAM1 and TIAM2. Interacts with SIRT2. Interacts (via coiled-coil domain) with FRMD4A. Found in a complex with PARD3, CYTH1 and FRMD4A. Interacts with SAPCD2. Interacts with PRKCA. In terms of assembly, interacts with PRKCZ. In terms of processing, acetylated. Deacetylated by SIRT2, thereby inhibiting Schwann cell peripheral myelination. Phosphorylation at Ser-824 by PRKCZ and PRKCI occurs at the most apical tip of epithelial cell-cell contacts during the initial phase of tight junction formation and may promote dissociation of the complex with PARD6. EGF-induced Tyr-1123 phosphorylation mediates dissociation from LIMK2. Phosphorylation by AURKA at Ser-958 is required for the normal establishment of neuronal polarity. Isoform 4 and isoform 5 are phosphorylated during oocyte maturation. In terms of tissue distribution, all isoforms are expressed in heart, while expression in brain is mainly limited to isoform 1, and to isoform 3 to a weaker level.

Its subcellular location is the cytoplasm. The protein localises to the endomembrane system. It is found in the cell junction. It localises to the tight junction. The protein resides in the adherens junction. Its subcellular location is the cell cortex. The protein localises to the cytoskeleton. It is found in the cell membrane. Functionally, adapter protein involved in asymmetrical cell division and cell polarization processes. Seems to play a central role in the formation of epithelial tight junctions. Targets the phosphatase PTEN to cell junctions. Association with PARD6B may prevent the interaction of PARD3 with F11R/JAM1, thereby preventing tight junction assembly. The PARD6-PARD3 complex links GTP-bound Rho small GTPases to atypical protein kinase C proteins. Required for establishment of neuronal polarity and normal axon formation in cultured hippocampal neurons. Involved in Schwann cell peripheral myelination. This Mus musculus (Mouse) protein is Partitioning defective 3 homolog (Pard3).